We begin with the raw amino-acid sequence, 402 residues long: MQKLTILGATGSIGASTLKVIEQNPDKFSVVALAADSNVEKMQQLCQRWQPEYAVMANKEAALRLKMALAVLAPNTQVLGGQEALCYVATLEQVDSVMAAIVGAAGLVPTMAAVKAGKRILLANKEALVMSGQLFIDEVEKSGAQLLPVDSEHNAIFQCLPQTVQGNLGRCDLASQGVSHILLTGSGGPFRYTDVAELEAVTPEQAIAHPNWSMGPKISVDSATMMNKGLEYIEAKWLFNASRDQLKVIIHPQSVIHSMVQYLDGSVLAQMGEPDMATPIALTLSYPERVKAGVKPLDFTQVGELTFLQPDFERYPCLALAIEACYLGQHATTTLNAANEVAVAAFLARQIKFTDIARVNDSVLNQVCKQSLASGLDSLESLLELDRMARTLADEVVRERAQ.

The NADPH site is built by T10, G11, S12, I13, N38, and N124. K125 contacts 1-deoxy-D-xylulose 5-phosphate. E126 provides a ligand contact to NADPH. D150 serves as a coordination point for Mn(2+). Residues S151, E152, S186, and H209 each contribute to the 1-deoxy-D-xylulose 5-phosphate site. E152 contributes to the Mn(2+) binding site. Residue G215 participates in NADPH binding. 4 residues coordinate 1-deoxy-D-xylulose 5-phosphate: S222, N227, K228, and E231. Mn(2+) is bound at residue E231.

This sequence belongs to the DXR family. The cofactor is Mg(2+). It depends on Mn(2+) as a cofactor.

It carries out the reaction 2-C-methyl-D-erythritol 4-phosphate + NADP(+) = 1-deoxy-D-xylulose 5-phosphate + NADPH + H(+). Its pathway is isoprenoid biosynthesis; isopentenyl diphosphate biosynthesis via DXP pathway; isopentenyl diphosphate from 1-deoxy-D-xylulose 5-phosphate: step 1/6. Its function is as follows. Catalyzes the NADPH-dependent rearrangement and reduction of 1-deoxy-D-xylulose-5-phosphate (DXP) to 2-C-methyl-D-erythritol 4-phosphate (MEP). In Vibrio vulnificus (strain CMCP6), this protein is 1-deoxy-D-xylulose 5-phosphate reductoisomerase.